The sequence spans 151 residues: Ribosome maturation factor RimP (151 aa).

This sequence belongs to the RimP family.

Its subcellular location is the cytoplasm. Required for maturation of 30S ribosomal subunits. This chain is Ribosome maturation factor RimP, found in Shewanella halifaxensis (strain HAW-EB4).